The chain runs to 150 residues: HTH-type transcriptional regulator LrpA (150 aa).

The region spanning 5–66 is the HTH asnC-type domain; that stretch reads LDDIDRILVR…RINPEAVGHL (62 aa). A DNA-binding region (H-T-H motif) is located at residues 24–43; it reads LSELATRAGLSVSAVQSRVR. Residues Val100, Gly102, and Glu104 each coordinate L-phenylalanine.

Homohexadecamer in the absence of any added ligand. Homooctamer. Tetramer of dimers. In the presence of phenylalanine, the hexadecamer dissociates into an octamer, which further dissociates partially into lower-order oligomers.

Its activity is regulated as follows. The DNA-binding activity of LrpA is modulated by interaction of LrpA with various effector molecules, including amino acids and vitamins. The DNA binding affinity is decreased by several amino acids, including phenylalanine, tyrosine, tryptophan, histidine, leucine and aspartate. Preferentially binds to aromatic amino acids. Besides amino acids, the binding affinity is also reduced by vitamins, including B1, B3, B6, VC, B7, B9, B12, VA and VK3. Its function is as follows. Transcriptional regulator that probably plays an important role in M.tuberculosis persistence. Regulates the expression of several genes, including lat, rsmG, whiB2, lsr2 and Rv2011c. Acts by binding directly to the promoter region of the target genes. The polypeptide is HTH-type transcriptional regulator LrpA (Mycobacterium tuberculosis (strain ATCC 25618 / H37Rv)).